A 153-amino-acid chain; its full sequence is Satratoxin biosynthesis SC2 cluster transcription factor SAT15 (153 aa).

The protein localises to the nucleus. In terms of biological role, transcriptional regulator that may regulate the expression of the satratoxin biosynthesis SC2 cluster, one of the 3 clusters involved in the biosynthesis of satratoxins, trichothecene mycotoxins that are associated with human food poisonings. The polypeptide is Satratoxin biosynthesis SC2 cluster transcription factor SAT15 (Stachybotrys chartarum (strain CBS 109288 / IBT 7711) (Toxic black mold)).